The chain runs to 257 residues: tRNA (guanine-N(7)-)-methyltransferase (257 aa).

Residues 1–58 (MQPIEQPGTGPDDITPESQDTNTAESAESGAETGHPRRIRSFVRRAGRTSTGQQRAIN) form a disordered region. Residues 16 to 26 (PESQDTNTAES) show a composition bias toward polar residues. Over residues 36–47 (PRRIRSFVRRAG) the composition is skewed to basic residues. S-adenosyl-L-methionine contacts are provided by Glu-89, Glu-114, Asp-141, and Asp-164. Asp-164 is a catalytic residue. Lys-168 is a substrate binding site. The interaction with RNA stretch occupies residues 170–175 (RHNKRR). Substrate-binding positions include Asp-200 and 235 to 238 (TKFE).

Belongs to the class I-like SAM-binding methyltransferase superfamily. TrmB family.

The catalysed reaction is guanosine(46) in tRNA + S-adenosyl-L-methionine = N(7)-methylguanosine(46) in tRNA + S-adenosyl-L-homocysteine. The protein operates within tRNA modification; N(7)-methylguanine-tRNA biosynthesis. Functionally, catalyzes the formation of N(7)-methylguanine at position 46 (m7G46) in tRNA. This chain is tRNA (guanine-N(7)-)-methyltransferase, found in Ralstonia pickettii (strain 12J).